The sequence spans 729 residues: MIYHRIAVNVPLSDGLLTYSHSEPLPPGTRVLVPFRNKTVVGMVWETDIAPDMDAARILSVQTVFVEEKPLSQSWRDLLAFTSRYYHYPTGQAVFAALPQGLKETRAVEMPQPPLFYALNEAGRAQTPPPARFNKKAALWDALLSGEMTMAALKQANAQAAKLIEDWAEQGWIETTEAAKPVLRPYRGQASHSEFVLNTGQQKASDEIQTALGRFRSFLLYGITGSGKTEVYFDAMAKVLAQGRQVLFLLPEINLTPQLLKRVENRFADVPTAVLHSRMAAGRRTQDYLRAMLGQAKLVIGTRLAVFTPLPDVGLIVVDEEHDGSFKQDNELRYHARDLAVWRAKQGGCPVVLGSATPSLESWHKAQSGAYRLLQLTERAHASAQLPQVDILNIGRLKLDNGFSPQALQLLKQNFEAGGMSLVYLNRRGFAPALFCGDCGHTFGCPNCSAKMVLHQRARQLRCHHCDHREPIPFKCPDCGNQDLTAVGHGTQRVEETLRAFLPKAAVVRVDRDSTAHKNDWADLYRRIANDEIDILVGTQMLAKGHDFARLNLVIVLNADGSLYSADFRAPERLFAELMQVSGRAGRADKPGKVLIQTQLPEHPVFAAVKAQDYAVFAENELNERQMFAMPPFGFQTAVRADAPRVADAMEFLNAAKETLAPLLPESVSRFGAAPMLMVRLAERERAQVFLESTSRQDLHRAVSLWVQVLQQNRDGKIRWSVDVDPQEA.

The 168-residue stretch at 209–376 (QTALGRFRSF…QSGAYRLLQL (168 aa)) folds into the Helicase ATP-binding domain. 222–229 (GITGSGKT) is an ATP binding site. Positions 319–322 (DEEH) match the DEAH box motif. Residues Cys-436, Cys-439, Cys-445, Cys-448, Cys-463, Cys-466, Cys-476, and Cys-479 each coordinate Zn(2+). Residues 471 to 623 (PIPFKCPDCG…YAVFAENELN (153 aa)) form the Helicase C-terminal domain.

Belongs to the helicase family. PriA subfamily. As to quaternary structure, interacts with PriB with high affinity in the absence of DNA. Component of the replication restart primosome. Zn(2+) is required as a cofactor.

The enzyme catalyses Couples ATP hydrolysis with the unwinding of duplex DNA by translocating in the 3'-5' direction.. The catalysed reaction is ATP + H2O = ADP + phosphate + H(+). Its activity is regulated as follows. Helicase and ATPase activities on forked DNA are stimulated by PriB; E.coli PriB does not stimulate this helicase. PriA:PriB complex-catalyzed duplex DNA winding is inhibited by CGS 15943 (CHEBI:131351). CGS 15943 decreases ATP hydrolysis and decreases PriA's affinity for DNA. Its function is as follows. Initiates the restart of stalled replication forks, which reloads the replicative helicase on sites other than the origin of replication. Recognizes and binds to abandoned replication forks and remodels them to uncover a helicase loading site. Promotes assembly of the primosome at these replication forks. DNA helicase with greatest unwinding activity on forked DNA substrates with relatively short duplex lagging strand arms. A DNA-dependent ATPase. Required for DNA transformation and DNA repair. Binds single-stranded (ss)DNA and replication fork-like DNA but not double-stranded (ds)DNA. This Neisseria gonorrhoeae (strain ATCC 700825 / FA 1090) protein is Replication restart protein PriA.